A 62-amino-acid chain; its full sequence is Large ribosomal subunit protein uL30 (62 aa).

This sequence belongs to the universal ribosomal protein uL30 family. As to quaternary structure, part of the 50S ribosomal subunit.

The sequence is that of Large ribosomal subunit protein uL30 from Alkalilimnicola ehrlichii (strain ATCC BAA-1101 / DSM 17681 / MLHE-1).